The following is a 478-amino-acid chain: Receptor-interacting serine/threonine-protein kinase 3 (478 aa).

At S2 the chain carries Phosphoserine. The 269-residue stretch at L22–I290 folds into the Protein kinase domain. ATP is bound by residues V28 to V36 and K51. D143 (proton acceptor) is an active-site residue. At S165 the chain carries Phosphoserine. Residue T185 is modified to Phosphothreonine. Phosphoserine; by autocatalysis is present on S201. T228 carries the phosphothreonine modification. S229 carries the post-translational modification Phosphoserine; by autocatalysis. T254 carries the post-translational modification Phosphothreonine. Residues S301 and S323 each carry the phosphoserine modification. Positions R311–D330 are disordered. The segment covering S313–D330 has biased composition (basic and acidic residues). T335 is modified (phosphothreonine). S350, S369, and S380 each carry phosphoserine. Residues E362 to N429 form a disordered region. Residues A376–G385 are compositionally biased toward polar residues. T392 is modified (phosphothreonine). Residues Q413–N429 are compositionally biased toward polar residues. An RIP homotypic interaction motif (RHIM) motif is present at residues L437 to R461. At R474 the chain carries Omega-N-methylarginine.

This sequence belongs to the protein kinase superfamily. TKL Ser/Thr protein kinase family. Interacts (via RIP homotypic interaction motif) with RIPK1 (via RIP homotypic interaction motif); this interaction induces RIPK1 phosphorylation and formation of a RIPK1-RIPK3 necrosis-inducing complex. Interacts with MLKL; the interaction is direct and triggers necroptosis. Interacts with ZBP1 (via RIP homotypic interaction motif); interaction with ZBP1 activates RIPK3, triggering necroptosis. Upon TNF-induced necrosis, the RIPK1-RIPK3 dimer further interacts with PGAM5 and MLKL; the formation of this complex leads to PGAM5 phosphorylation and increase in PGAM5 phosphatase activity. Binds TRAF2 and is recruited to the TNFR-1 signaling complex. Interacts with PYGL, GLUL and GLUD1; these interactions result in activation of these metabolic enzymes. Interacts with BIRC2/c-IAP1, BIRC3/c-IAP2 and XIAP/BIRC4. Interacts with ARHGEF2. Interacts with PELI1 (via atypical FHA domain); the phosphorylated form at Thr-185 binds preferentially to PELI1. Interacts with BUB1B, TRAF2 and STUB1. Interacts with CASP6. Component of the AIM2 PANoptosome complex, a multiprotein complex that drives inflammatory cell death (PANoptosis). RIPK1 and RIPK3 undergo reciprocal auto- and trans-phosphorylation. Autophosphorylated following interaction with ZBP1. Phosphorylation of Ser-201 plays a role in the necroptotic function of RIPK3. Autophosphorylates at Thr-228 and Ser-229 following activation by ZBP1: phosphorylation at these sites is a hallmark of necroptosis and is required for binding MLKL. Phosphorylation at Thr-185 is important for its kinase activity, interaction with PELI1 and for its ability to mediate TNF-induced necroptosis. In terms of processing, polyubiquitinated with 'Lys-48' and 'Lys-63'-linked chains by BIRC2/c-IAP1 and BIRC3/c-IAP2, leading to activation of NF-kappa-B. Ubiquitinated by STUB1 leading to its subsequent proteasome-dependent degradation.

The protein resides in the cytoplasm. The protein localises to the cytosol. Its subcellular location is the nucleus. The enzyme catalyses L-seryl-[protein] + ATP = O-phospho-L-seryl-[protein] + ADP + H(+). It catalyses the reaction L-threonyl-[protein] + ATP = O-phospho-L-threonyl-[protein] + ADP + H(+). With respect to regulation, activity is stimulated by ZBP1, which senses double-stranded Z-RNA structures. RIPK3-dependent necroptosis is inhibited by RIPK1: RIPK1 prevents the ZBP1-induced activation of RIPK3 via FADD-mediated recruitment of CASP8, which cleaves RIPK1 and limits TNF-induced necroptosis. Its function is as follows. Serine/threonine-protein kinase that activates necroptosis and apoptosis, two parallel forms of cell death. Necroptosis, a programmed cell death process in response to death-inducing TNF-alpha family members, is triggered by RIPK3 following activation by ZBP1. Activated RIPK3 forms a necrosis-inducing complex and mediates phosphorylation of MLKL, promoting MLKL localization to the plasma membrane and execution of programmed necrosis characterized by calcium influx and plasma membrane damage. In addition to TNF-induced necroptosis, necroptosis can also take place in the nucleus in response to orthomyxoviruses infection: following ZBP1 activation, which senses double-stranded Z-RNA structures, nuclear RIPK3 catalyzes phosphorylation and activation of MLKL, promoting disruption of the nuclear envelope and leakage of cellular DNA into the cytosol. Also regulates apoptosis: apoptosis depends on RIPK1, FADD and CASP8, and is independent of MLKL and RIPK3 kinase activity. Phosphorylates RIPK1: RIPK1 and RIPK3 undergo reciprocal auto- and trans-phosphorylation. In some cell types, also able to restrict viral replication by promoting cell death-independent responses. In response to flavivirus infection in neurons, promotes a cell death-independent pathway that restricts viral replication: together with ZBP1, promotes a death-independent transcriptional program that modifies the cellular metabolism via up-regulation expression of the enzyme ACOD1/IRG1 and production of the metabolite itaconate. Itaconate inhibits the activity of succinate dehydrogenase, generating a metabolic state in neurons that suppresses replication of viral genomes. RIPK3 binds to and enhances the activity of three metabolic enzymes: GLUL, GLUD1, and PYGL. These metabolic enzymes may eventually stimulate the tricarboxylic acid cycle and oxidative phosphorylation, which could result in enhanced ROS production. The polypeptide is Receptor-interacting serine/threonine-protein kinase 3 (Rattus norvegicus (Rat)).